The primary structure comprises 403 residues: Argininosuccinate synthase (403 aa).

9–17 (AYSGGLDTS) is a binding site for ATP. Tyr-86 serves as a coordination point for L-citrulline. Gly-116 serves as a coordination point for ATP. L-aspartate contacts are provided by Thr-118, Asn-122, and Asp-123. L-citrulline is bound at residue Asn-122. L-citrulline contacts are provided by Arg-126, Ser-174, Ser-183, Glu-259, and Tyr-271.

It belongs to the argininosuccinate synthase family. Type 1 subfamily. Homotetramer.

The protein localises to the cytoplasm. The enzyme catalyses L-citrulline + L-aspartate + ATP = 2-(N(omega)-L-arginino)succinate + AMP + diphosphate + H(+). It participates in amino-acid biosynthesis; L-arginine biosynthesis; L-arginine from L-ornithine and carbamoyl phosphate: step 2/3. The polypeptide is Argininosuccinate synthase (Shouchella clausii (strain KSM-K16) (Alkalihalobacillus clausii)).